The following is a 256-amino-acid chain: MSKRPADIIISTPGSKVRRRLNFDSPYSSRAAVPTVRVTKRQSWTNRPINRKPRWYRMYRSPDVPKGCEGPCKVQSFESRHDVVHIGKVMCISDVTRGIGLTHRVGKRFCVKSIYILGKIWMDENIKTKNHTNSVMFFLVRDRRPVDKPQDFGEVFNMFDNEPSTATVKNMHRDRYQVLRKWHATVTGGQYASKEQALVRRFFRVNNYVVYNQQEAGKYENHTENALMLYMACTHASNPVYATLKIRIYFYDSVSN.

The short motif at 3–20 (KRPADIIISTPGSKVRRR) is the Bipartite nuclear localization signal element. A Nuclear localization signal motif is present at residues 40 to 54 (KRQSWTNRPINRKPR). A zinc finger lies at 68–85 (CEGPCKVQSFESRHDVVH). The Nuclear export signal motif lies at 101 to 122 (LTHRVGKRFCVKSIYILGKIWM). The Bipartite nuclear localization signal motif lies at 200 to 247 (RRFFRVNNYVVYNQQEAGKYENHTENALMLYMACTHASNPVYATLKIR).

It belongs to the geminiviridae capsid protein family. Homomultimer. Binds to single-stranded and double-stranded viral DNA. Interacts (via nuclear localization signals) with host importin alpha-1a.

The protein localises to the virion. Its subcellular location is the host nucleus. Encapsidates the viral DNA into characteristic twinned ('geminate') particles. Binds the genomic viral ssDNA and shuttles it into and out of the cell nucleus. The CP of bipartite geminiviruses is not required for cell-to-cell or systemic movement. The protein is Capsid protein of Manihot esculenta (Cassava).